We begin with the raw amino-acid sequence, 112 residues long: Putative pterin-4-alpha-carbinolamine dehydratase (112 aa).

The protein belongs to the pterin-4-alpha-carbinolamine dehydratase family.

It catalyses the reaction (4aS,6R)-4a-hydroxy-L-erythro-5,6,7,8-tetrahydrobiopterin = (6R)-L-erythro-6,7-dihydrobiopterin + H2O. The polypeptide is Putative pterin-4-alpha-carbinolamine dehydratase (Vibrio campbellii (strain ATCC BAA-1116)).